The sequence spans 249 residues: Glutathione S-transferase tcpG (249 aa).

The GST N-terminal domain maps to 20 to 109; that stretch reads LYVRKAIPAP…YLCDKHDKDG (90 aa). A GST C-terminal domain is found at 115 to 249; the sequence is NATERAQVTS…TEEEIELHGR (135 aa).

This sequence belongs to the GST superfamily.

It carries out the reaction RX + glutathione = an S-substituted glutathione + a halide anion + H(+). The protein operates within secondary metabolite biosynthesis. In terms of biological role, glutathione S-transferase; part of the gene cluster that mediates the biosynthesis of an unusual class of epipolythiodioxopiperazines (ETPs) lacking the reactive thiol group important for toxicity. Firstly, L-tyrosine is prenylated by tcpD, before undergoing condensation with L-glycine in a reaction catalyzed by the NRPS tcpP leading to the diketopiperazine (DKP) backbone. Afterwards the alpha-carbon of tyrosine is oxidized by the cytochrome P450 tcpC to form a hydroxyl group. However, in contrast other ETP biosynthesis pathways studied so far, tcpC is not able to bishydroxylate the DKP at both alpha-carbon positions, but hydroxylates the alpha-carbon of the tyrosine part and the nitrogen of the glycine part. The next steps involve an alpha,beta-elimination reaction catalyzed by tcpI, a methylation by the methyltransferase tcpN the action of the four enzyme cascade tcpG/K/J/I. Due to a dysfunctional cytochrome P450 monooxygenase tcpC, the pathway leads to the biosynthesis of probable non-toxic metabolites lacking the reactive thiol group. The chain is Glutathione S-transferase tcpG from Claviceps purpurea (strain 20.1) (Ergot fungus).